Reading from the N-terminus, the 346-residue chain is Uroporphyrinogen decarboxylase (346 aa).

Substrate contacts are provided by residues 23–27, Asp-72, Tyr-155, Ser-209, and His-322; that span reads RQAGR.

The protein belongs to the uroporphyrinogen decarboxylase family. Homodimer.

It is found in the cytoplasm. The enzyme catalyses uroporphyrinogen III + 4 H(+) = coproporphyrinogen III + 4 CO2. It functions in the pathway porphyrin-containing compound metabolism; protoporphyrin-IX biosynthesis; coproporphyrinogen-III from 5-aminolevulinate: step 4/4. Catalyzes the decarboxylation of four acetate groups of uroporphyrinogen-III to yield coproporphyrinogen-III. This chain is Uroporphyrinogen decarboxylase, found in Anaeromyxobacter sp. (strain Fw109-5).